The sequence spans 261 residues: Type III pantothenate kinase (261 aa).

6-13 (DVGNTNAK) lines the ATP pocket. A substrate-binding site is contributed by 108-111 (GADR). The active-site Proton acceptor is aspartate 110. Threonine 134 contacts ATP. Threonine 188 serves as a coordination point for substrate.

The protein belongs to the type III pantothenate kinase family. In terms of assembly, homodimer. The cofactor is NH4(+). It depends on K(+) as a cofactor.

Its subcellular location is the cytoplasm. It carries out the reaction (R)-pantothenate + ATP = (R)-4'-phosphopantothenate + ADP + H(+). It functions in the pathway cofactor biosynthesis; coenzyme A biosynthesis; CoA from (R)-pantothenate: step 1/5. In terms of biological role, catalyzes the phosphorylation of pantothenate (Pan), the first step in CoA biosynthesis. This chain is Type III pantothenate kinase, found in Sphingopyxis alaskensis (strain DSM 13593 / LMG 18877 / RB2256) (Sphingomonas alaskensis).